Reading from the N-terminus, the 98-residue chain is UPF0473 protein lp_2273 (98 aa).

It belongs to the UPF0473 family.

In Lactiplantibacillus plantarum (strain ATCC BAA-793 / NCIMB 8826 / WCFS1) (Lactobacillus plantarum), this protein is UPF0473 protein lp_2273.